The primary structure comprises 763 residues: Dual specificity tyrosine-phosphorylation-regulated kinase 1A (763 aa).

Ser14 is modified (phosphoserine). The tract at residues 33-56 (QMPHSHQYSDRRQPNISDQQVSAL) is disordered. Polar residues predominate over residues 46 to 56 (PNISDQQVSAL). A Phosphotyrosine; by autocatalysis modification is found at Tyr111. Positions 115 to 136 (KKRRHQQGQGDDSSHKKERKVY) are disordered. The Bipartite nuclear localization signal signature appears at 117 to 134 (RRHQQGQGDDSSHKKERK). Tyr140 carries the phosphotyrosine; by autocatalysis modification. Tyr145 is modified (phosphotyrosine). Tyr159 bears the Phosphotyrosine; by autocatalysis mark. The region spanning 159 to 479 (YEIDSLIGKG…PYYALQHSFF (321 aa)) is the Protein kinase domain. Residue 165–173 (IGKGSFGQV) participates in ATP binding. Residue Tyr177 is modified to Phosphotyrosine; by autocatalysis. Lys188 is a binding site for ATP. Tyr219 carries the post-translational modification Phosphotyrosine; by autocatalysis. 238-241 (FEML) serves as a coordination point for ATP. The active-site Proton acceptor is the Asp287. Phosphoserine; by autocatalysis is present on Ser310. Phosphotyrosine; by autocatalysis is present on residues Tyr319 and Tyr321. At Thr402 the chain carries Phosphothreonine; by autocatalysis. The tract at residues 408–442 (TKDGKREYKPPGTRKLHNILGVETGGPGGRRAGES) is disordered. Phosphotyrosine; by autocatalysis is present on Tyr449. Positions 485 to 501 (EGTNTSNSVSTSPAMEQ) are enriched in polar residues. 3 disordered regions span residues 485–540 (EGTN…HSGG), 596–679 (NALH…GNQA), and 744–763 (DREESPMTGVCVQQSPVASS). A compositionally biased stretch (low complexity) spans 502-525 (SQSSGTTSSTSSSSGGSSGTSNSG). A phosphoserine mark is found at Ser529 and Ser538. Residues 595–625 (QNALHHHHGNSSHHHHHHHHHHHHHGQQALG) are histidine-rich domain (HRD). Basic residues predominate over residues 598–620 (LHHHHGNSSHHHHHHHHHHHHHG). Residues 634–645 (NSPTNSSSTQDS) are compositionally biased toward polar residues. The span at 654 to 672 (SMTSLSSSTTSSSTSSSST) shows a compositional bias: low complexity. Phosphoserine is present on residues Ser748 and Ser758. A compositionally biased stretch (polar residues) spans 754–763 (CVQQSPVASS).

This sequence belongs to the protein kinase superfamily. CMGC Ser/Thr protein kinase family. MNB/DYRK subfamily. In terms of assembly, interacts with RAD54L2/ARIP4. Interacts with CRY2. Interacts with RANBP9. Interacts with WDR68. Interacts with SIRT1. Post-translationally, can also autophosphorylate on serine and threonine residues (in vitro). Autophosphorylated on numerous tyrosine residues. Detected in brain (at protein level). Ubiquitous.

The protein resides in the nucleus speckle. It catalyses the reaction L-seryl-[protein] + ATP = O-phospho-L-seryl-[protein] + ADP + H(+). It carries out the reaction L-threonyl-[protein] + ATP = O-phospho-L-threonyl-[protein] + ADP + H(+). The enzyme catalyses L-tyrosyl-[protein] + ATP = O-phospho-L-tyrosyl-[protein] + ADP + H(+). The catalysed reaction is [DNA-directed RNA polymerase] + ATP = phospho-[DNA-directed RNA polymerase] + ADP + H(+). With respect to regulation, inhibited by RANBP9. Inhibited by harmine, leucettamine B and leucettine L41. Its function is as follows. Dual-specificity kinase which possesses both serine/threonine and tyrosine kinase activities. Exhibits a substrate preference for proline at position P+1 and arginine at position P-3. Plays an important role in double-strand breaks (DSBs) repair following DNA damage. Mechanistically, phosphorylates RNF169 and increases its ability to block accumulation of TP53BP1 at the DSB sites thereby promoting homologous recombination repair (HRR). Also acts as a positive regulator of transcription by acting as a CTD kinase that mediates phosphorylation of the CTD (C-terminal domain) of the large subunit of RNA polymerase II (RNAP II) POLR2A. May play a role in a signaling pathway regulating nuclear functions of cell proliferation. Modulates alternative splicing by phosphorylating the splice factor SRSF6. Has pro-survival function and negatively regulates the apoptotic process. Promotes cell survival upon genotoxic stress through phosphorylation of SIRT1. This in turn inhibits p53/TP53 activity and apoptosis. Phosphorylates SEPTIN4, SEPTIN5 and SF3B1 at 'Thr-434'. The protein is Dual specificity tyrosine-phosphorylation-regulated kinase 1A (Dyrk1a) of Rattus norvegicus (Rat).